Here is a 340-residue protein sequence, read N- to C-terminus: Glycerol-3-phosphate dehydrogenase [NAD(P)+] (340 aa).

Ser-11, Trp-12, Arg-33, and Lys-106 together coordinate NADPH. Sn-glycerol 3-phosphate contacts are provided by Lys-106, Gly-137, and Ser-139. An NADPH-binding site is contributed by Ala-141. Lys-192, Asp-245, Ser-255, Arg-256, and Asn-257 together coordinate sn-glycerol 3-phosphate. The active-site Proton acceptor is Lys-192. Residue Arg-256 coordinates NADPH. Val-280 and Glu-282 together coordinate NADPH.

The protein belongs to the NAD-dependent glycerol-3-phosphate dehydrogenase family.

The protein localises to the cytoplasm. It carries out the reaction sn-glycerol 3-phosphate + NAD(+) = dihydroxyacetone phosphate + NADH + H(+). The enzyme catalyses sn-glycerol 3-phosphate + NADP(+) = dihydroxyacetone phosphate + NADPH + H(+). Its pathway is membrane lipid metabolism; glycerophospholipid metabolism. Catalyzes the reduction of the glycolytic intermediate dihydroxyacetone phosphate (DHAP) to sn-glycerol 3-phosphate (G3P), the key precursor for phospholipid synthesis. The chain is Glycerol-3-phosphate dehydrogenase [NAD(P)+] from Bacillus mycoides (strain KBAB4) (Bacillus weihenstephanensis).